A 363-amino-acid polypeptide reads, in one-letter code: Phospho-N-acetylmuramoyl-pentapeptide-transferase (363 aa).

10 helical membrane-spanning segments follow: residues 15 to 33 (FTTLFFLITLSLIVNSFIF), 82 to 102 (NTPTMGGIFIILPLLLLLLIV), 106 to 126 (FYSMGIILLFFGSLSFFIIGF), 147 to 167 (FILQSLISILFIVLAYQNGYI), 183 to 203 (IVIFPICFVTLVGLSNAVNLT), 207 to 227 (DGLASGCGSIVFYGLGTEIFI), 233 to 253 (LIIYGLIAYAMSGLCVGFLKF), 260 to 280 (IFMGDTGSLTIGATLGYISIL), 285 to 305 (FTLFIISGIFVIEALSVIIQV), and 341 to 361 (IVENFWKINILLVILGIVLKI).

The protein belongs to the glycosyltransferase 4 family. MraY subfamily. Mg(2+) serves as cofactor.

Its subcellular location is the cell inner membrane. The enzyme catalyses UDP-N-acetyl-alpha-D-muramoyl-L-alanyl-gamma-D-glutamyl-meso-2,6-diaminopimeloyl-D-alanyl-D-alanine + di-trans,octa-cis-undecaprenyl phosphate = di-trans,octa-cis-undecaprenyl diphospho-N-acetyl-alpha-D-muramoyl-L-alanyl-D-glutamyl-meso-2,6-diaminopimeloyl-D-alanyl-D-alanine + UMP. The protein operates within cell wall biogenesis; peptidoglycan biosynthesis. Catalyzes the initial step of the lipid cycle reactions in the biosynthesis of the cell wall peptidoglycan: transfers peptidoglycan precursor phospho-MurNAc-pentapeptide from UDP-MurNAc-pentapeptide onto the lipid carrier undecaprenyl phosphate, yielding undecaprenyl-pyrophosphoryl-MurNAc-pentapeptide, known as lipid I. The chain is Phospho-N-acetylmuramoyl-pentapeptide-transferase from Prochlorococcus marinus (strain MIT 9515).